We begin with the raw amino-acid sequence, 388 residues long: Succinate--CoA ligase [ADP-forming] subunit beta (388 aa).

One can recognise an ATP-grasp domain in the interval 9–244 (KEILRKFGVA…LDEEDPAEIE (236 aa)). Residues lysine 46, 53 to 55 (GRG), glutamate 99, alanine 102, and glutamate 107 each bind ATP. Mg(2+)-binding residues include asparagine 199 and aspartate 213. Substrate-binding positions include asparagine 264 and 321-323 (GIM).

This sequence belongs to the succinate/malate CoA ligase beta subunit family. As to quaternary structure, heterotetramer of two alpha and two beta subunits. Mg(2+) is required as a cofactor.

It catalyses the reaction succinate + ATP + CoA = succinyl-CoA + ADP + phosphate. The catalysed reaction is GTP + succinate + CoA = succinyl-CoA + GDP + phosphate. Its pathway is carbohydrate metabolism; tricarboxylic acid cycle; succinate from succinyl-CoA (ligase route): step 1/1. Functionally, succinyl-CoA synthetase functions in the citric acid cycle (TCA), coupling the hydrolysis of succinyl-CoA to the synthesis of either ATP or GTP and thus represents the only step of substrate-level phosphorylation in the TCA. The beta subunit provides nucleotide specificity of the enzyme and binds the substrate succinate, while the binding sites for coenzyme A and phosphate are found in the alpha subunit. This chain is Succinate--CoA ligase [ADP-forming] subunit beta, found in Burkholderia multivorans (strain ATCC 17616 / 249).